The primary structure comprises 220 residues: Deoxyribose-phosphate aldolase (220 aa).

The Proton donor/acceptor role is filled by Asp89. Lys151 serves as the catalytic Schiff-base intermediate with acetaldehyde. Residue Lys180 is the Proton donor/acceptor of the active site.

The protein belongs to the DeoC/FbaB aldolase family. DeoC type 1 subfamily.

It localises to the cytoplasm. It catalyses the reaction 2-deoxy-D-ribose 5-phosphate = D-glyceraldehyde 3-phosphate + acetaldehyde. Its pathway is carbohydrate degradation; 2-deoxy-D-ribose 1-phosphate degradation; D-glyceraldehyde 3-phosphate and acetaldehyde from 2-deoxy-alpha-D-ribose 1-phosphate: step 2/2. Catalyzes a reversible aldol reaction between acetaldehyde and D-glyceraldehyde 3-phosphate to generate 2-deoxy-D-ribose 5-phosphate. The polypeptide is Deoxyribose-phosphate aldolase (Macrococcus caseolyticus (strain JCSC5402) (Macrococcoides caseolyticum)).